Here is an 84-residue protein sequence, read N- to C-terminus: Mitochondrial import inner membrane translocase subunit Tim9 (84 aa).

The Twin CX3C motif motif lies at 36–60; the sequence is CFQSCITNFRIRKLDDEEQLCVYKC. 2 disulfide bridges follow: cysteine 36–cysteine 60 and cysteine 40–cysteine 56.

The protein belongs to the small Tim family. In terms of assembly, heterohexamer; composed of 3 copies of timm9 and 3 copies of timm10, named soluble 70 kDa complex. Associates directly with the TIM22 complex, whose core is composed of timm22. Interacts with the transmembrane regions of multi-pass transmembrane proteins in transit.

The protein resides in the mitochondrion inner membrane. Its function is as follows. Component of the TIM22 complex, a complex that mediates the import and insertion of multi-pass transmembrane proteins into the mitochondrial inner membrane. The TIM22 complex forms a twin-pore translocase that uses the membrane potential as external driving force. The chain is Mitochondrial import inner membrane translocase subunit Tim9 (timm9) from Dictyostelium discoideum (Social amoeba).